An 85-amino-acid polypeptide reads, in one-letter code: Small ribosomal subunit protein bS16 (85 aa).

The protein belongs to the bacterial ribosomal protein bS16 family.

In Xanthomonas oryzae pv. oryzae (strain PXO99A), this protein is Small ribosomal subunit protein bS16.